The primary structure comprises 523 residues: Calcium-dependent protein kinase 28 (523 aa).

Glycine 2 is lipidated: N-myristoyl glycine. Cysteine 4 carries S-palmitoyl cysteine lipidation. The disordered stretch occupies residues 15–43; sequence SSRRSSQTKSKAAPTPIDTKASTKRRTGS. The 261-residue stretch at 62 to 322 folds into the Protein kinase domain; the sequence is YTIGKLLGHG…AAQALSHAWV (261 aa). Residues 68–76 and lysine 91 each bind ATP; that span reads LGHGQFGYT. The active-site Proton acceptor is the aspartate 188. Phosphoserine is present on residues serine 228 and serine 318. The autoinhibitory domain stretch occupies residues 328-358; sequence ATDIPVDISVLNNLRQFVRYSRLKQFALRAL. 4 EF-hand domains span residues 365 to 400, 402 to 437, 444 to 479, and 482 to 509; these read AEIS…DLPW, LKDS…VHQL, KWQL…RGSI, and LLDE…ASIS. Aspartate 378, aspartate 380, asparagine 382, glutamate 389, aspartate 415, asparagine 417, aspartate 419, glutamate 426, aspartate 457, aspartate 459, aspartate 461, tyrosine 463, glutamate 468, aspartate 487, aspartate 489, aspartate 491, and lysine 493 together coordinate Ca(2+). A Phosphoserine modification is found at serine 495. Glutamate 498 is a binding site for Ca(2+). Serine 515 bears the Phosphoserine mark.

Belongs to the protein kinase superfamily. Ser/Thr protein kinase family. CDPK subfamily. Interacts with BIK1. As to expression, expressed in vascular and meristematic tissues throughout plant development.

The protein localises to the cell membrane. It catalyses the reaction L-seryl-[protein] + ATP = O-phospho-L-seryl-[protein] + ADP + H(+). It carries out the reaction L-threonyl-[protein] + ATP = O-phospho-L-threonyl-[protein] + ADP + H(+). Activated by calcium. Autophosphorylation plays an important role in the regulation of the kinase activity. In terms of biological role, may play a role in signal transduction pathways that involve calcium as a second messenger. Acts as a developmentally controlled regulator for coordinated stem elongation and vascular development. Acts as a key component which contributes to the developmental switch that establishes the transition from vegetative to reproductive growth. Involved in pathogen-associated molecular pattern (PAMP)-triggered immunity (PTI) signaling. Interacts with and phosphorylates the kinase BIK1, a central rate-limiting kinase in PTI signaling. Facilitates BIK1 turnover and negatively regulates BIK1-mediated immune responses triggered by several PAMPs. Its kinase activity is necessary and sufficient for its function in PTI signaling. The polypeptide is Calcium-dependent protein kinase 28 (Arabidopsis thaliana (Mouse-ear cress)).